The sequence spans 92 residues: YcgL domain-containing protein SO_2575 (92 aa).

The region spanning 1-85 (MLCAVYKSSR…PQVNLLAEHR (85 aa)) is the YcgL domain.

The sequence is that of YcgL domain-containing protein SO_2575 from Shewanella oneidensis (strain ATCC 700550 / JCM 31522 / CIP 106686 / LMG 19005 / NCIMB 14063 / MR-1).